The chain runs to 753 residues: MGTNGGVIAEQSMEIETNENPDKVEEPVVRRKRVTRRRHRRIHSKNNCLTPPNSDDDPQMSTPDDPVIHSPPSIGAAPGMNGYHGSGVKLEESSGACGSPDDGLLDSSEESRRRQKTCRVCGDHATGYNFNVITCESCKAFFRRNALRPKEFKCPYSEDCEINSVSRRFCQKCRLRKCFTVGMKKEWILNEEQLRRRKNSRLNNTGTCNKRSQPGNQQSPQGPNQQPHLSPHHPGVAIYPPQPQRPLTINPMDNQMMHHMQANRPNAMPQLISPPGAQPYPLTSPVGSSASDSPPNRSLTMMHNGEKSPDGYDPNIMAHRAPPPSFNNRPKMDSGQVVLSTEEYKQLLSRIPGAQVPGLMNEEEPINKRAAYNCNGHPMPAETTPPYSAPMSDMSLSRHNSTSSGTEKNHMTHSTVSAIPGNSAQNHFDIASFGMGIVTATGGGDAAEEMYKRMNMFYENCIQSALDSPENQEPKPQEAMIPKEEYMTPTHGFQYQSDPYQVPPAERNINYQLNAAELKALDAVREAFYGMDDPMEQGRQMQSFLKANKTPADIMNIMDVTMRRFVKVAKGVPAFREVSQEGKFSLLKGGMIEMLTVRGVTRYDASTNSFKTPTIKGQNVSVNVDDMFAKLNANAQAQKAKCLEFFGFFDEEIKKNELAVYLVMLAVLFSVRSDPPMNENDVRIVTERHNHFMSLLNRYLESLFGEQARRIFERIPKALGLLNEIARNAGMLFMGTVRSGEAEELPGEFFKIK.

Residues 1–109 (MGTNGGVIAE…PDDGLLDSSE (109 aa)) are disordered. A compositionally biased stretch (basic and acidic residues) spans 20–29 (NPDKVEEPVV). Basic residues predominate over residues 30–44 (RRKRVTRRRHRRIHS). The nuclear receptor DNA-binding region spans 115–190 (QKTCRVCGDH…VGMKKEWILN (76 aa)). 2 consecutive NR C4-type zinc fingers follow at residues 118–138 (CRVC…CESC) and 154–173 (CPYS…CQKC). Positions 191-206 (EEQLRRRKNSRLNNTG) match the Nuclear localization signal motif. 3 disordered regions span residues 198-251 (KNSR…TINP), 266-314 (NAMP…GYDP), and 376-410 (GHPM…EKNH). Polar residues predominate over residues 201 to 211 (RLNNTGTCNKR). Over residues 212-227 (SQPGNQQSPQGPNQQP) the composition is skewed to low complexity. Polar residues-rich tracts occupy residues 285-301 (PVGS…SLTM) and 394-410 (MSLS…EKNH). The NR LBD domain occupies 516–753 (AELKALDAVR…ELPGEFFKIK (238 aa)).

Belongs to the nuclear hormone receptor family. As to quaternary structure, interacts with din-1 isoform d. As to expression, expressed throughout muscles of the pharynx. Expressed in epidermal seam cells, the vulva, head neurons, mature spermatheca, uterus and intestine.

It is found in the nucleus. Nuclear receptor which binds directly to response elements in target gene promoters. Activity is modulated by binding of steroid hormone ligands that include dafachronic acids. Regulates expression of genes involved in postembryonic development and the dauer diapause, in response to environmental cues. Inhibits the expression of let-7 family members when bound to corepressor din-1s which is an isoform of din-1. Plays a role in controlling the timing of seam cell development during the larval stages. Has a role in the immune response to bacterial infection, via regulation of let-7 miRNAs. Controls expression of genes that promote the aerobic catabolism of fatty acids for reproductive growth. May be involved in thermotolerance. The protein is Nuclear hormone receptor family member daf-12 of Caenorhabditis elegans.